Here is a 251-residue protein sequence, read N- to C-terminus: 1-(5-phosphoribosyl)-5-[(5-phosphoribosylamino)methylideneamino] imidazole-4-carboxamide isomerase (251 aa).

Asp8 acts as the Proton acceptor in catalysis. The active-site Proton donor is the Asp131.

It belongs to the HisA/HisF family.

The protein localises to the cytoplasm. The enzyme catalyses 1-(5-phospho-beta-D-ribosyl)-5-[(5-phospho-beta-D-ribosylamino)methylideneamino]imidazole-4-carboxamide = 5-[(5-phospho-1-deoxy-D-ribulos-1-ylimino)methylamino]-1-(5-phospho-beta-D-ribosyl)imidazole-4-carboxamide. Its pathway is amino-acid biosynthesis; L-histidine biosynthesis; L-histidine from 5-phospho-alpha-D-ribose 1-diphosphate: step 4/9. The protein is 1-(5-phosphoribosyl)-5-[(5-phosphoribosylamino)methylideneamino] imidazole-4-carboxamide isomerase of Burkholderia lata (strain ATCC 17760 / DSM 23089 / LMG 22485 / NCIMB 9086 / R18194 / 383).